We begin with the raw amino-acid sequence, 213 residues long: Uracil phosphoribosyltransferase (213 aa).

Residues arginine 78, arginine 103, and 131–139 (DPMLATGGT) each bind 5-phospho-alpha-D-ribose 1-diphosphate. Uracil is bound by residues isoleucine 197 and 202–204 (GDA). Residue aspartate 203 participates in 5-phospho-alpha-D-ribose 1-diphosphate binding.

This sequence belongs to the UPRTase family. Mg(2+) is required as a cofactor.

It carries out the reaction UMP + diphosphate = 5-phospho-alpha-D-ribose 1-diphosphate + uracil. Its pathway is pyrimidine metabolism; UMP biosynthesis via salvage pathway; UMP from uracil: step 1/1. With respect to regulation, allosterically activated by GTP. Its function is as follows. Catalyzes the conversion of uracil and 5-phospho-alpha-D-ribose 1-diphosphate (PRPP) to UMP and diphosphate. In Bifidobacterium longum subsp. infantis (strain ATCC 15697 / DSM 20088 / JCM 1222 / NCTC 11817 / S12), this protein is Uracil phosphoribosyltransferase.